Reading from the N-terminus, the 183-residue chain is Peptide deformylase (183 aa).

Fe cation contacts are provided by C110 and H153. Residue E154 is part of the active site. H157 provides a ligand contact to Fe cation.

Belongs to the polypeptide deformylase family. It depends on Fe(2+) as a cofactor.

The catalysed reaction is N-terminal N-formyl-L-methionyl-[peptide] + H2O = N-terminal L-methionyl-[peptide] + formate. In terms of biological role, removes the formyl group from the N-terminal Met of newly synthesized proteins. Requires at least a dipeptide for an efficient rate of reaction. N-terminal L-methionine is a prerequisite for activity but the enzyme has broad specificity at other positions. The chain is Peptide deformylase from Listeria monocytogenes serovar 1/2a (strain ATCC BAA-679 / EGD-e).